Consider the following 478-residue polypeptide: JmjC domain-containing histone demethylation protein 1 (478 aa).

The segment at 5 to 68 (SESCPLCKVH…IYHCPECVPK (64 aa)) adopts a PHD-type zinc-finger fold. In terms of domain architecture, JmjC spans 217 to 383 (SDVAKLGVDF…MQLKINEIER (167 aa)). T266 is a substrate binding site. Fe cation contacts are provided by H269 and D271. A substrate-binding site is contributed by K286. Residue H351 participates in Fe cation binding.

Belongs to the JHDM1 histone demethylase family. Fe(2+) is required as a cofactor.

The protein localises to the nucleus. It carries out the reaction N(6),N(6)-dimethyl-L-lysyl(36)-[histone H3] + 2 2-oxoglutarate + 2 O2 = L-lysyl(36)-[histone H3] + 2 formaldehyde + 2 succinate + 2 CO2. Histone demethylase that specifically demethylates 'Lys-36' of histone H3, thereby playing a central role in histone code. The sequence is that of JmjC domain-containing histone demethylation protein 1 (JHD1) from Candida albicans (strain SC5314 / ATCC MYA-2876) (Yeast).